The chain runs to 952 residues: MPGKIENGTPKDLKTGNDFVSAAKSLLDRAFKSHHSYYGLCSTSCQVYDTAWVAMIPKTRDNVKQWLFPECFHYLLKTQAADGSWGSLPTTQTAGILDTASAVLALLCHAQEPLQILDVSPDEMGLRIEHGVTSLKRQLAVWNDVEDTNHIGVEFIIPALLSMLEKELDVPSFEFPCRSILERMHGEKLGHFDLEQVYGKPSSLLHSLEAFLGKLDFDRLSHHLYHGSMMASPSSTAAYLIGATKWDDEAEDYLRHVMRNGAGHGNGGISGTFPTTHFECSWIIATLLKGGFTLKQIDGDGLRGLSTILLEALRDENGVIGFAPRTADVDDTAKALLALSLVNQPVSPDIMIKVFEGKDHFTTFGSERDPSLTSNLHVLLSLLKQSNLSQYHPQILKTTLFTCRWWWGSDHCVKDKWNLSHLYPTMLLVEAFTEVLHLIDGGELSSLFDESFKCKIGLSIFQAVLRIILTQDNDGSWRGYREQTCYAILALVQARHVCFFTHMVDRLQSCVDRGFSWLKSCSFHSQDLTWTSKTAYEVGFVAEAYKLAALQSASLEVPAATIGHSVTSAVPSSDLEKYMRLVRKTALFSPLDEWGLMASIIESSFFVPLLQAQRVEIYPRDNIKVDEDKYLSIIPFTWVGCNNRSRTFASNRWLYDMMYLSLLGYQTDEYMEAVAGPVFGDVSLLHQTIDKVIDNTMGNLARANGTVHSGNGHQHESPNIGQVEDTLTRFTNSVLNHKDVLNSSSSDQDTLRREFRTFMHAHITQIEDNSRFSKQASSDAFSSPEQSYFQWVNSTGGSHVACAYSFAFSNCLMSANLLQGKDAFPSGTQKYLISSVMRHATNMCRMYNDFGSIARDNAERNVNSIHFPEFTLCNGTSQNLDERKERLLKIATYEQGYLDRALEALERQSRDDAGDRAGSKDMRKLKIVKLFCDVTDLYDQLYVIKDLSSSMK.

The short motif at 328 to 331 (DVDD) is the DXDD B-type cyclization motif element. The Mg(2+) site is built by aspartate 668, glutamate 672, asparagine 848, aspartate 849, serine 852, and aspartate 856. The short motif at 668 to 672 (DEYME) is the DEXXE A-type cyclization motif element.

The protein belongs to the terpene synthase family. It depends on Mg(2+) as a cofactor.

The catalysed reaction is ent-copalyl diphosphate = ent-kaur-16-ene + diphosphate. It catalyses the reaction (2E,6E,10E)-geranylgeranyl diphosphate = ent-copalyl diphosphate. Its pathway is plant hormone biosynthesis; gibberellin biosynthesis. Bifunctional ent-kaurene synthase; part of the gene cluster that mediates the biosynthesis of gibberellins (GAs), diterpenoids that may provide a selective advantage during infection of the preferred host plant, rice. Gibberellins (GAs) are diterpenoids and are synthesized via the mevalonate pathway. Biosynthesis of the major metabolite GA3 (gibberellic acid) from geranylgeranyl diphosphate (GGPP) requires 13 steps. The GGPP produced by the geranylgeranyl diphosphate synthase GGS2 is converted to ent-kaurene via ent-copalyldiphosphate in a two-step cyclization reaction performed by the bifunctional ent-copalyl diphosphate synthase/ent-kaurene synthase enzyme (CPS/KS). Ent-Kaurene is metabolized to GAs by a series of oxidation reactions catalyzed by cytochrome P450 monooxygenases. Cytochrome P450 monooxygenase P450-4 is an ent-kaurene oxidase that catalyzes the three oxidation steps between ent-kaurene and ent-kaurenoic acid. The highly multifunctional cytochrome P450 monooxygenase P450-1 then catalyzes four steps involving oxidation at two carbon atoms, in the main pathway from ent-kaurenoic acid to GA14 via GA12-aldehyde as well as producing kaurenolides and fujenoic acids as by-products. The cytochrome P450 monooxygenase P450-2 then converts GA14 to GA4 by removal of C-20. GA4 is further converted to GA7 by the GA4 desaturase DES via 1,2-desaturation before cytochrome P450 monooxygenase P450-3, a 13-hydroxylase, hydroxylates GA7 to GA3, the final product of the GA-biosynthetic pathway. This is Bifunctional ent-kaurene synthase from Gibberella fujikuroi (strain CBS 195.34 / IMI 58289 / NRRL A-6831) (Bakanae and foot rot disease fungus).